We begin with the raw amino-acid sequence, 477 residues long: Glycogen synthase (477 aa).

Lys15 provides a ligand contact to ADP-alpha-D-glucose.

It belongs to the glycosyltransferase 1 family. Bacterial/plant glycogen synthase subfamily.

The catalysed reaction is [(1-&gt;4)-alpha-D-glucosyl](n) + ADP-alpha-D-glucose = [(1-&gt;4)-alpha-D-glucosyl](n+1) + ADP + H(+). It participates in glycan biosynthesis; glycogen biosynthesis. Functionally, synthesizes alpha-1,4-glucan chains using ADP-glucose. The polypeptide is Glycogen synthase (Salmonella typhi).